The chain runs to 298 residues: MENFQKVEKIGEGTYGVVYKAKNKLTGEVVALKKIRLDTETEGVPSTAIREISLLKELNHPNIVKLLDVIHTENKLYLVFELLHQDLKKFMDASAVTGIPLPLIKSYLFQLLQGLAFCHSHRVLHRDLKPQNLLINAEGSIKLADFGLARAFGVPVRTYTHEVVTLWYRAPEILLGCKYYSTAVDIWSLGCIFAEMVTRRALFPGDSEIDQLFRIFRTLGTPDEVVWPGVTSMPDYKPSFPKWARQDFSKVVPPLDEDGRSLLSQMLHYDPNKRISAKAALAHPFFQDVTKPVPHLRL.

The residue at position 1 (Met-1) is an N-acetylmethionine. Positions 4–286 (FQKVEKIGEG…AKAALAHPFF (283 aa)) constitute a Protein kinase domain. An N6-acetyllysine modification is found at Lys-6. 10-18 (IGEGTYGVV) contributes to the ATP binding site. Thr-14 bears the Phosphothreonine mark. Tyr-15 carries the post-translational modification Phosphotyrosine; by WEE1. Position 19 is a phosphotyrosine (Tyr-19). Residues Lys-33, 81 to 83 (ELL), and Asp-86 each bind ATP. Residue Asp-127 is the Proton acceptor of the active site. Residues 129-132 (KPQN) and Asp-145 each bind ATP. Mg(2+)-binding residues include Asn-132 and Asp-145. Thr-160 carries the phosphothreonine; by CAK and CCRK modification.

Belongs to the protein kinase superfamily. CMGC Ser/Thr protein kinase family. CDC2/CDKX subfamily. In terms of assembly, found in a complex with CABLES1, CCNA1 and CCNE1. Interacts with CABLES1. Interacts with UHRF2. Part of a complex consisting of UHRF2, CDK2 and CCNE1. Interacts with the Speedy/Ringo proteins SPDYA and SPDYC. Interaction with SPDYA promotes kinase activation via a conformation change that alleviates obstruction of the substrate-binding cleft by the T-loop. Found in a complex with both SPDYA and CDKN1B/KIP1. Binds to RB1 and CDK7. Binding to CDKN1A (p21) leads to CDK2/cyclin E inactivation at the G1-S phase DNA damage checkpoint, thereby arresting cells at the G1-S transition during DNA repair. Associated with PTPN6 and beta-catenin/CTNNB1. Interacts with CACUL1. May interact with CEP63. Interacts with ANKRD17. Interacts with CEBPA (when phosphorylated). Forms a ternary complex with CCNA2 and CDKN1B; CDKN1B inhibits the kinase activity of CDK2 through conformational rearrangements. Interacts with cyclins A, B1, B3, D, or E. Interacts with CDK2AP2. Requires Mg(2+) as cofactor. Post-translationally, phosphorylated at Thr-160 by CDK7 in a CAK complex. Phosphorylation at Thr-160 promotes kinase activity, whereas phosphorylation at Tyr-15 by WEE1 reduces slightly kinase activity. Phosphorylated on Thr-14 and Tyr-15 during S and G2 phases before being dephosphorylated by CDC25A. Nitrosylated after treatment with nitric oxide (DETA-NO).

The protein localises to the cytoplasm. It localises to the cytoskeleton. It is found in the microtubule organizing center. The protein resides in the centrosome. Its subcellular location is the nucleus. The protein localises to the cajal body. It localises to the endosome. It catalyses the reaction L-seryl-[protein] + ATP = O-phospho-L-seryl-[protein] + ADP + H(+). It carries out the reaction L-threonyl-[protein] + ATP = O-phospho-L-threonyl-[protein] + ADP + H(+). With respect to regulation, phosphorylation at Thr-14 or Tyr-15 inactivates the enzyme, while phosphorylation at Thr-160 activates it. Stimulated by MYC. Inactivated by CDKN1A (p21). Functionally, serine/threonine-protein kinase involved in the control of the cell cycle; essential for meiosis, but dispensable for mitosis. Phosphorylates CABLES1, CTNNB1, CDK2AP2, ERCC6, NBN, USP37, p53/TP53, NPM1, CDK7, RB1, BRCA2, MYC, NPAT, EZH2. Triggers duplication of centrosomes and DNA. Acts at the G1-S transition to promote the E2F transcriptional program and the initiation of DNA synthesis, and modulates G2 progression; controls the timing of entry into mitosis/meiosis by controlling the subsequent activation of cyclin B/CDK1 by phosphorylation, and coordinates the activation of cyclin B/CDK1 at the centrosome and in the nucleus. Crucial role in orchestrating a fine balance between cellular proliferation, cell death, and DNA repair in embryonic stem cells (ESCs). Activity of CDK2 is maximal during S phase and G2; activated by interaction with cyclin E during the early stages of DNA synthesis to permit G1-S transition, and subsequently activated by cyclin A2 (cyclin A1 in germ cells) during the late stages of DNA replication to drive the transition from S phase to mitosis, the G2 phase. EZH2 phosphorylation promotes H3K27me3 maintenance and epigenetic gene silencing. Cyclin E/CDK2 prevents oxidative stress-mediated Ras-induced senescence by phosphorylating MYC. Involved in G1-S phase DNA damage checkpoint that prevents cells with damaged DNA from initiating mitosis; regulates homologous recombination-dependent repair by phosphorylating BRCA2, this phosphorylation is low in S phase when recombination is active, but increases as cells progress towards mitosis. In response to DNA damage, double-strand break repair by homologous recombination a reduction of CDK2-mediated BRCA2 phosphorylation. Involved in regulation of telomere repair by mediating phosphorylation of NBN. Phosphorylation of RB1 disturbs its interaction with E2F1. NPM1 phosphorylation by cyclin E/CDK2 promotes its dissociation from unduplicated centrosomes, thus initiating centrosome duplication. Cyclin E/CDK2-mediated phosphorylation of NPAT at G1-S transition and until prophase stimulates the NPAT-mediated activation of histone gene transcription during S phase. Required for vitamin D-mediated growth inhibition by being itself inactivated. Involved in the nitric oxide- (NO) mediated signaling in a nitrosylation/activation-dependent manner. USP37 is activated by phosphorylation and thus triggers G1-S transition. CTNNB1 phosphorylation regulates insulin internalization. Phosphorylates FOXP3 and negatively regulates its transcriptional activity and protein stability. Phosphorylates ERCC6 which is essential for its chromatin remodeling activity at DNA double-strand breaks. Acts as a regulator of the phosphatidylinositol 3-kinase/protein kinase B signal transduction by mediating phosphorylation of the C-terminus of protein kinase B (PKB/AKT1 and PKB/AKT2), promoting its activation. The protein is Cyclin-dependent kinase 2 (CDK2) of Mesocricetus auratus (Golden hamster).